Here is a 450-residue protein sequence, read N- to C-terminus: Putative MYST-like histone acetyltransferase 1 (450 aa).

Positions 63–122 constitute a Tudor-knot domain; sequence LEVGTRVMCRWRDQKLHPVKVIERRKSSTSSSPADYEYYVHYTEFNRRLDEWVKLEQLDL. The 272-residue stretch at 174-445 folds into the MYST-type HAT domain; it reads TKVKNIAKIE…VDVSKLIWTP (272 aa). Residues 207–232 form a C2HC MYST-type zinc finger; it reads LFFCEFCLNFMKRKEQLQRHMKKCDL. The residue at position 274 (lysine 274) is an N6-acetyllysine; by autocatalysis. Acetyl-CoA-binding positions include 317-319 and 324-330; these read ILT and QRKGYGK. The active-site Proton donor/acceptor is the glutamate 350. Serine 354 is an acetyl-CoA binding site.

This sequence belongs to the MYST (SAS/MOZ) family. Post-translationally, autoacetylation at Lys-274 is required for proper function.

It is found in the nucleus. It catalyses the reaction L-lysyl-[protein] + acetyl-CoA = N(6)-acetyl-L-lysyl-[protein] + CoA + H(+). In terms of biological role, histone acetyltransferase which may be involved in transcriptional activation. This Oryza sativa subsp. japonica (Rice) protein is Putative MYST-like histone acetyltransferase 1.